Here is a 184-residue protein sequence, read N- to C-terminus: UPF0398 protein BAA_1648 (184 aa).

The protein belongs to the UPF0398 family.

This Bacillus anthracis (strain A0248) protein is UPF0398 protein BAA_1648.